The following is a 175-amino-acid chain: NADH-ubiquinone oxidoreductase chain 6 (175 aa).

5 consecutive transmembrane segments (helical) span residues 1-21, 25-45, 47-67, 88-108, and 149-169; these read MMTYIVFILSVIFVIGFVGFS, SPIYGGLVLIVSGGVGCGIIM, FGGSFLGLMVFLIYLGGMLVV, TVMGVFLLGLLMEVMLVLYVL, and YGAWVVVVTGWSLLVGVLVIL.

It belongs to the complex I subunit 6 family. As to quaternary structure, core subunit of respiratory chain NADH dehydrogenase (Complex I) which is composed of 45 different subunits.

The protein localises to the mitochondrion inner membrane. The catalysed reaction is a ubiquinone + NADH + 5 H(+)(in) = a ubiquinol + NAD(+) + 4 H(+)(out). Core subunit of the mitochondrial membrane respiratory chain NADH dehydrogenase (Complex I) which catalyzes electron transfer from NADH through the respiratory chain, using ubiquinone as an electron acceptor. Essential for the catalytic activity and assembly of complex I. This chain is NADH-ubiquinone oxidoreductase chain 6 (MT-ND6), found in Equus asinus (Donkey).